A 355-amino-acid polypeptide reads, in one-letter code: Methylxanthine N3-demethylase NdmB (355 aa).

The Rieske domain occupies 19–131; that stretch reads WHPVCTLNEF…CEVKYDIVWV (113 aa). [2Fe-2S] cluster is bound by residues Cys-64, His-66, Cys-87, and His-90.

The cofactor is [2Fe-2S] cluster.

The catalysed reaction is theobromine + NADH + O2 + H(+) = 7-methylxanthine + formaldehyde + NAD(+) + H2O. The enzyme catalyses theobromine + NADPH + O2 + H(+) = 7-methylxanthine + formaldehyde + NADP(+) + H2O. It catalyses the reaction 3-methylxanthine + NADH + O2 + H(+) = xanthine + formaldehyde + NAD(+) + H2O. It carries out the reaction 3-methylxanthine + NADPH + O2 + H(+) = xanthine + formaldehyde + NADP(+) + H2O. Involved in the caffeine degradation, which is the essential first step for assimilating the carbon and nitrogen in caffeine. Catalyzes the N3-demethylation of theobromine to produce 7-methylxanthine and formaldehyde. Also catalyzes the N3-demethylation of 3-methylxanthine, caffeine, and theophylline to xanthine, paraxanthine, and 1-methylxanthine, respectively. NADH is the preferred substrate. The chain is Methylxanthine N3-demethylase NdmB (ndmB) from Pseudomonas putida (Arthrobacter siderocapsulatus).